A 513-amino-acid polypeptide reads, in one-letter code: V-type proton ATPase subunit B, kidney isoform (513 aa).

Residue arginine 394 participates in ATP binding. The short motif at 510–513 is the PDZ-binding element; it reads DTAL.

This sequence belongs to the ATPase alpha/beta chains family. V-ATPase is a heteromultimeric enzyme made up of two complexes: the ATP-hydrolytic V1 complex and the proton translocation V0 complex. The V1 complex consists of three catalytic AB heterodimers that form a heterohexamer, three peripheral stalks each consisting of EG heterodimers, one central rotor including subunits D and F, and the regulatory subunits C and H. The proton translocation complex V0 consists of the proton transport subunit a, a ring of proteolipid subunits c9c'', rotary subunit d, subunits e and f, and the accessory subunits ATP6AP1/Ac45 and ATP6AP2/PRR. Forms a complex with NHERF1 and SCL4A7. As to expression, kidney; localizes to early distal nephron, encompassing thick ascending limbs and distal convoluted tubules (at protein level). Expressed in the cochlea and endolymphatic sac.

The protein resides in the apical cell membrane. It is found in the basolateral cell membrane. Non-catalytic subunit of the V1 complex of vacuolar(H+)-ATPase (V-ATPase), a multisubunit enzyme composed of a peripheral complex (V1) that hydrolyzes ATP and a membrane integral complex (V0) that translocates protons. V-ATPase is responsible for acidifying and maintaining the pH of intracellular compartments and in some cell types, is targeted to the plasma membrane, where it is responsible for acidifying the extracellular environment. Essential for the proper assembly and activity of V-ATPase. In renal intercalated cells, mediates secretion of protons (H+) into the urine thereby ensuring correct urinary acidification. Required for optimal olfactory function by mediating the acidification of the nasal olfactory epithelium. The protein is V-type proton ATPase subunit B, kidney isoform (ATP6V1B1) of Homo sapiens (Human).